A 78-amino-acid polypeptide reads, in one-letter code: Small ribosomal subunit protein bS20 (78 aa).

Belongs to the bacterial ribosomal protein bS20 family.

Functionally, binds directly to 16S ribosomal RNA. This chain is Small ribosomal subunit protein bS20, found in Streptococcus pneumoniae serotype 19F (strain G54).